A 335-amino-acid chain; its full sequence is MKTYYEKDANVDLLQGKTVAVVGYGSQGHAQAQNLRDSGVEVVVGVRPGKSYEVAKADGFEVMSVSEAVRTAQVVQMLLPDEQQAHVYKAEIEENLREGQMLLFSHGFNIHFGQINPPSYVDVAMVAPKSPGHLVRRVFQEGNGVPALVAVHQDATGTALHVALAYAKGVGCTRAGVIETTFQEETETDLFGEQAVLCGGVTALVKAGFETLTEGGYRPEIAYFECLHELKLIVDLMYEGGLTNMRHSISDTAEFGDYVTGSRIVTDGTKKEMKRVLTEIQQGEFAKKWILENQAGRPTHNAMKKAEQNHGLEKVGAELREMMSWIHAPKELVKK.

The 180-residue stretch at 1–180 folds into the KARI N-terminal Rossmann domain; the sequence is MKTYYEKDAN…GCTRAGVIET (180 aa). NADP(+) is bound by residues 24–27, Arg-47, Ser-51, and 81–84; these read YGSQ and DEQQ. Residue His-106 is part of the active site. An NADP(+)-binding site is contributed by Gly-132. Residues 181-326 enclose the KARI C-terminal knotted domain; sequence TFQEETETDL…AELREMMSWI (146 aa). 4 residues coordinate Mg(2+): Asp-189, Glu-193, Glu-225, and Glu-229. A substrate-binding site is contributed by Ser-250.

This sequence belongs to the ketol-acid reductoisomerase family. The cofactor is Mg(2+).

It catalyses the reaction (2R)-2,3-dihydroxy-3-methylbutanoate + NADP(+) = (2S)-2-acetolactate + NADPH + H(+). The catalysed reaction is (2R,3R)-2,3-dihydroxy-3-methylpentanoate + NADP(+) = (S)-2-ethyl-2-hydroxy-3-oxobutanoate + NADPH + H(+). It functions in the pathway amino-acid biosynthesis; L-isoleucine biosynthesis; L-isoleucine from 2-oxobutanoate: step 2/4. It participates in amino-acid biosynthesis; L-valine biosynthesis; L-valine from pyruvate: step 2/4. Involved in the biosynthesis of branched-chain amino acids (BCAA). Catalyzes an alkyl-migration followed by a ketol-acid reduction of (S)-2-acetolactate (S2AL) to yield (R)-2,3-dihydroxy-isovalerate. In the isomerase reaction, S2AL is rearranged via a Mg-dependent methyl migration to produce 3-hydroxy-3-methyl-2-ketobutyrate (HMKB). In the reductase reaction, this 2-ketoacid undergoes a metal-dependent reduction by NADPH to yield (R)-2,3-dihydroxy-isovalerate. This is Ketol-acid reductoisomerase (NADP(+)) 2 from Bacillus cereus (strain ZK / E33L).